A 177-amino-acid chain; its full sequence is Large ribosomal subunit protein uL6 (177 aa).

The interval Pro-154–Lys-177 is disordered. A compositionally biased stretch (basic and acidic residues) spans Glu-155 to Arg-171.

It belongs to the universal ribosomal protein uL6 family. In terms of assembly, part of the 50S ribosomal subunit.

This protein binds to the 23S rRNA, and is important in its secondary structure. It is located near the subunit interface in the base of the L7/L12 stalk, and near the tRNA binding site of the peptidyltransferase center. This Alcanivorax borkumensis (strain ATCC 700651 / DSM 11573 / NCIMB 13689 / SK2) protein is Large ribosomal subunit protein uL6.